We begin with the raw amino-acid sequence, 251 residues long: Imidazole glycerol phosphate synthase subunit HisF (251 aa).

Active-site residues include Asp11 and Asp130.

It belongs to the HisA/HisF family. Heterodimer of HisH and HisF.

Its subcellular location is the cytoplasm. The catalysed reaction is 5-[(5-phospho-1-deoxy-D-ribulos-1-ylimino)methylamino]-1-(5-phospho-beta-D-ribosyl)imidazole-4-carboxamide + L-glutamine = D-erythro-1-(imidazol-4-yl)glycerol 3-phosphate + 5-amino-1-(5-phospho-beta-D-ribosyl)imidazole-4-carboxamide + L-glutamate + H(+). The protein operates within amino-acid biosynthesis; L-histidine biosynthesis; L-histidine from 5-phospho-alpha-D-ribose 1-diphosphate: step 5/9. Its function is as follows. IGPS catalyzes the conversion of PRFAR and glutamine to IGP, AICAR and glutamate. The HisF subunit catalyzes the cyclization activity that produces IGP and AICAR from PRFAR using the ammonia provided by the HisH subunit. This chain is Imidazole glycerol phosphate synthase subunit HisF, found in Chlorobium limicola (strain DSM 245 / NBRC 103803 / 6330).